Consider the following 243-residue polypeptide: Complement C1q tumor necrosis factor-related protein 5 (243 aa).

The signal sequence occupies residues 1–15 (MRPLLALLLLGLASG). Positions 15 to 124 (GSPPLDDNKI…VPPPADTPLP (110 aa)) are disordered. The 66-residue stretch at 30–95 (GQPGLPGTPG…AGPVGAIGPA (66 aa)) folds into the Collagen-like domain. Residues 99-238 (SVPPRSAFSA…GFLVYSDWHS (140 aa)) enclose the C1q domain.

As to quaternary structure, homotrimer (via collagen-like domain). May form higher order oligomers by supercoiling of the trimers. May interact with ERFE.

Its subcellular location is the secreted. This Rattus norvegicus (Rat) protein is Complement C1q tumor necrosis factor-related protein 5 (C1qtnf5).